Here is a 327-residue protein sequence, read N- to C-terminus: Tryptophan--tRNA ligase (327 aa).

Residues 9–11 (RPT) and 17–18 (GN) contribute to the ATP site. The short motif at 10–18 (PTGNLHLGN) is the 'HIGH' region element. Asp-133 lines the L-tryptophan pocket. Residues 145-147 (GKD), Val-186, and 194-198 (KMGKS) contribute to the ATP site. The 'KMSKS' region motif lies at 194-198 (KMGKS).

It belongs to the class-I aminoacyl-tRNA synthetase family. Homodimer.

The protein localises to the cytoplasm. The catalysed reaction is tRNA(Trp) + L-tryptophan + ATP = L-tryptophyl-tRNA(Trp) + AMP + diphosphate + H(+). Its function is as follows. Catalyzes the attachment of tryptophan to tRNA(Trp). In Porphyromonas gingivalis (strain ATCC BAA-308 / W83), this protein is Tryptophan--tRNA ligase.